A 308-amino-acid polypeptide reads, in one-letter code: Ribosomal RNA small subunit methyltransferase H (308 aa).

S-adenosyl-L-methionine-binding positions include 46-48, aspartate 63, tyrosine 87, aspartate 108, and glutamine 115; that span reads AGH. A disordered region spans residues 269–308; it reads TKRPVEASEEERGRNPRARSAKLRAAEKVAAPEGLPEVEV. The segment covering 271–282 has biased composition (basic and acidic residues); sequence RPVEASEEERGR.

This sequence belongs to the methyltransferase superfamily. RsmH family.

The protein localises to the cytoplasm. The catalysed reaction is cytidine(1402) in 16S rRNA + S-adenosyl-L-methionine = N(4)-methylcytidine(1402) in 16S rRNA + S-adenosyl-L-homocysteine + H(+). Its function is as follows. Specifically methylates the N4 position of cytidine in position 1402 (C1402) of 16S rRNA. This is Ribosomal RNA small subunit methyltransferase H from Deinococcus geothermalis (strain DSM 11300 / CIP 105573 / AG-3a).